Consider the following 390-residue polypeptide: Probable purine permease 10 (390 aa).

Helical transmembrane passes span 44–64 (WLRVTLYTFFVISGQTVATIL), 78–98 (LATVVQLVGFPVLLPYYILSF), 117–137 (VLVYVVLGLLVGADCYLYSIG), 140–160 (YLPVSTYSLICASQLAFNAFF), 169–189 (LTPIILNSLFLLTISSTLLAF), 204–224 (YVKGFICTVAASAGYGLVLSL), 241–261 (VMDMIIYVSLVASCVSVVGLF), 287–307 (LVWTAVTWQVFSIGGTGLIFE), 312–332 (FSNAISVLGLPVVPILAVIIF), and 336–356 (MNGLKVISMILAIWGFTSYVY). The segment at 370 to 390 (EITTTESPDPPEAEESTWQSK) is disordered.

This sequence belongs to the purine permeases (TC 2.A.7.14) family.

It localises to the membrane. The chain is Probable purine permease 10 (PUP10) from Arabidopsis thaliana (Mouse-ear cress).